The sequence spans 1160 residues: ATP-dependent helicase/deoxyribonuclease subunit B (1160 aa).

Belongs to the helicase family. AddB/RexB type 2 subfamily. Heterodimer of AddA and RexB. Requires Mg(2+) as cofactor.

In terms of biological role, the heterodimer acts as both an ATP-dependent DNA helicase and an ATP-dependent, dual-direction single-stranded exonuclease. Recognizes the chi site generating a DNA molecule suitable for the initiation of homologous recombination. This subunit has 5' -&gt; 3' nuclease activity but not helicase activity. This is ATP-dependent helicase/deoxyribonuclease subunit B from Lactobacillus helveticus (strain DPC 4571).